A 255-amino-acid chain; its full sequence is Hydroxyacylglutathione hydrolase (255 aa).

Zn(2+) is bound by residues His-55, His-57, Asp-59, His-60, His-112, Asp-129, and His-167.

This sequence belongs to the metallo-beta-lactamase superfamily. Glyoxalase II family. Monomer. Requires Zn(2+) as cofactor.

The catalysed reaction is an S-(2-hydroxyacyl)glutathione + H2O = a 2-hydroxy carboxylate + glutathione + H(+). It participates in secondary metabolite metabolism; methylglyoxal degradation; (R)-lactate from methylglyoxal: step 2/2. In terms of biological role, thiolesterase that catalyzes the hydrolysis of S-D-lactoyl-glutathione to form glutathione and D-lactic acid. The polypeptide is Hydroxyacylglutathione hydrolase (Halorhodospira halophila (strain DSM 244 / SL1) (Ectothiorhodospira halophila (strain DSM 244 / SL1))).